Reading from the N-terminus, the 338-residue chain is Aspartate-semialdehyde dehydrogenase (338 aa).

NADP(+) is bound by residues 13–16 (SGAV) and 41–42 (RS). Phosphate is bound at residue Arg-101. Cys-132 acts as the Acyl-thioester intermediate in catalysis. Gln-159 is a binding site for substrate. 162–163 (SG) is a binding site for NADP(+). Lys-216 contacts phosphate. Arg-238 contributes to the substrate binding site. His-245 serves as the catalytic Proton acceptor. Residue Asn-317 coordinates NADP(+).

It belongs to the aspartate-semialdehyde dehydrogenase family. In terms of assembly, homodimer.

The catalysed reaction is L-aspartate 4-semialdehyde + phosphate + NADP(+) = 4-phospho-L-aspartate + NADPH + H(+). Its pathway is amino-acid biosynthesis; L-lysine biosynthesis via DAP pathway; (S)-tetrahydrodipicolinate from L-aspartate: step 2/4. The protein operates within amino-acid biosynthesis; L-methionine biosynthesis via de novo pathway; L-homoserine from L-aspartate: step 2/3. It functions in the pathway amino-acid biosynthesis; L-threonine biosynthesis; L-threonine from L-aspartate: step 2/5. Catalyzes the NADPH-dependent formation of L-aspartate-semialdehyde (L-ASA) by the reductive dephosphorylation of L-aspartyl-4-phosphate. This chain is Aspartate-semialdehyde dehydrogenase, found in Shewanella violacea (strain JCM 10179 / CIP 106290 / LMG 19151 / DSS12).